The following is a 495-amino-acid chain: Cobyric acid synthase (495 aa).

In terms of domain architecture, GATase cobBQ-type spans 249-443 (EININVIRLP…LHGLFDNGAW (195 aa)). Residue cysteine 330 is the Nucleophile of the active site. Histidine 435 is an active-site residue.

It belongs to the CobB/CobQ family. CobQ subfamily.

It functions in the pathway cofactor biosynthesis; adenosylcobalamin biosynthesis. Its function is as follows. Catalyzes amidations at positions B, D, E, and G on adenosylcobyrinic A,C-diamide. NH(2) groups are provided by glutamine, and one molecule of ATP is hydrogenolyzed for each amidation. This is Cobyric acid synthase from Gloeothece citriformis (strain PCC 7424) (Cyanothece sp. (strain PCC 7424)).